The primary structure comprises 489 residues: MALLFLLPLVMQGVSRAEMGTADLGPSSVPTPTNVTIESYNMNPIVYWEYQIMPQVPVFTVEVKNYGVKNSEWIDACINISHHYCNISDHVGDPSNSLWVRVKARVGQKESAYAKSEEFAVCRDGKIGPPKLDIRKEEKQIMIDIFHPSVFVNGDEQEVDYDPETTCYIRVYNVYVRMNGSEIQYKILTQKEDDCDEIQCQLAIPVSSLNSQYCVSAEGVLHVWGVTTEKSKEVCITIFNSSIKGSLWIPVVAALLLFLVLSLVFICFYIKKINPLKEKSIILPKSLISVVRSATLETKPESKYVSLITSYQPFSLEKEVVCEEPLSPATVPGMHTEDNPGKVEHTEELSSITEVVTTEENIPDVVPGSHLTPIERESSSPLSSNQSEPGSIALNSYHSRNCSESDHSRNGFDTDSSCLESHSSLSDSEFPPNNKGEIKTEGQELITVIKAPTSFGYDKPHVLVDLLVDDSGKESLIGYRPTEDSKEFS.

The first 17 residues, 1–17 (MALLFLLPLVMQGVSRA), serve as a signal peptide directing secretion. Topologically, residues 18–245 (EMGTADLGPS…ITIFNSSIKG (228 aa)) are extracellular. N-linked (GlcNAc...) asparagine glycosylation is found at Asn-34, Asn-79, and Asn-86. Cys-77 and Cys-85 are joined by a disulfide. Cys-122 and Cys-167 are disulfide-bonded. Asn-179 carries N-linked (GlcNAc...) asparagine glycosylation. 2 disulfide bridges follow: Cys-195/Cys-200 and Cys-214/Cys-235. N-linked (GlcNAc...) asparagine glycosylation occurs at Asn-240. A helical membrane pass occupies residues 246-266 (SLWIPVVAALLLFLVLSLVFI). The Cytoplasmic portion of the chain corresponds to 267 to 489 (CFYIKKINPL…RPTEDSKEFS (223 aa)). The segment at 329-437 (ATVPGMHTED…SEFPPNNKGE (109 aa)) is disordered. Positions 335–348 (HTEDNPGKVEHTEE) are enriched in basic and acidic residues. The segment covering 349 to 360 (LSSITEVVTTEE) has biased composition (polar residues). The residue at position 369 (Ser-369) is a Phosphoserine. Thr-372 is modified (phosphothreonine). Position 378 is a phosphoserine (Ser-378). The span at 379 to 391 (SSPLSSNQSEPGS) shows a compositional bias: low complexity. Positions 401–412 (NCSESDHSRNGF) are enriched in basic and acidic residues. At Ser-403 the chain carries Phosphoserine. The segment covering 415–429 (DSSCLESHSSLSDSE) has biased composition (low complexity). At Tyr-457 the chain carries Phosphotyrosine.

This sequence belongs to the type II cytokine receptor family. As to quaternary structure, monomer. Heterodimer with IFNGR2, to form the IFNG receptor complex. Interacts with JAK1. Interacts (when phosphorylated) with STAT1. Interacts with SOCS1. In terms of processing, phosphorylated at Ser/Thr residues. Phosphorylation of Tyr-457 is required for IFNG receptor signal transduction. Influenza virus infection leads to phosphorylation in a CSNK1A1-dependent manner. Ubiquitinated after phosphorylation in a CSNK1A1-dependent manner, leading to the lysosome-dependent degradation. Proteasomally degraded through 'Lys-48'-mediated ubiquitination. Ubiquitination is necessary for efficient IFNGR1 signaling.

It is found in the cell membrane. In terms of biological role, receptor subunit for interferon gamma/INFG that plays crucial roles in antimicrobial, antiviral, and antitumor responses by activating effector immune cells and enhancing antigen presentation. Associates with transmembrane accessory factor IFNGR2 to form a functional receptor. Upon ligand binding, the intracellular domain of IFNGR1 opens out to allow association of downstream signaling components JAK1 and JAK2. In turn, activated JAK1 phosphorylates IFNGR1 to form a docking site for STAT1. Subsequent phosphorylation of STAT1 leads to dimerization, translocation to the nucleus, and stimulation of target gene transcription. STAT3 can also be activated in a similar manner although activation seems weaker. IFNGR1 intracellular domain phosphorylation also provides a docking site for SOCS1 that regulates the JAK-STAT pathway by competing with STAT1 binding to IFNGR1. The protein is Interferon gamma receptor 1 of Homo sapiens (Human).